We begin with the raw amino-acid sequence, 93 residues long: Large ribosomal subunit protein uL23cz/uL23cy (93 aa).

The protein belongs to the universal ribosomal protein uL23 family. As to quaternary structure, part of the 50S ribosomal subunit.

The protein localises to the plastid. Its subcellular location is the chloroplast. Its function is as follows. Binds to 23S rRNA. This chain is Large ribosomal subunit protein uL23cz/uL23cy (rpl23-A), found in Lactuca sativa (Garden lettuce).